The chain runs to 665 residues: Translation factor guf1, mitochondrial (665 aa).

The transit peptide at 1–40 directs the protein to the mitochondrion; the sequence is MRGCLQLARWLSAAPTRPAASHWPGLCAAPRFFSHSAILR. The region spanning 67–247 is the tr-type G domain; that stretch reads ERYRNFCIVA…TVVDKIPAPI (181 aa). GTP contacts are provided by residues 76–83, 140–144, and 194–197; these read AHVDHGKS, DTPGH, and NKVD.

It belongs to the TRAFAC class translation factor GTPase superfamily. Classic translation factor GTPase family. LepA subfamily.

It is found in the mitochondrion inner membrane. The catalysed reaction is GTP + H2O = GDP + phosphate + H(+). Promotes mitochondrial protein synthesis. May act as a fidelity factor of the translation reaction, by catalyzing a one-codon backward translocation of tRNAs on improperly translocated ribosomes. Binds to mitochondrial ribosomes in a GTP-dependent manner. This Aspergillus terreus (strain NIH 2624 / FGSC A1156) protein is Translation factor guf1, mitochondrial (guf1).